A 216-amino-acid polypeptide reads, in one-letter code: Large ribosomal subunit protein uL1 (216 aa).

Belongs to the universal ribosomal protein uL1 family.

In Oryza sativa subsp. indica (Rice), this protein is Large ribosomal subunit protein uL1.